Consider the following 164-residue polypeptide: Nucleotide-binding protein Emin_0136 (164 aa).

It belongs to the YajQ family.

Nucleotide-binding protein. In Elusimicrobium minutum (strain Pei191), this protein is Nucleotide-binding protein Emin_0136.